The sequence spans 95 residues: MANTKSAIKRIKTIERNRIRNCAYKSVVKTFIKKYLKVLSDYTNAPNSNGVENIQTTLGIVYTKIDKAVKRGVYHSNKAARMKSKLALKYNVIKK.

It belongs to the bacterial ribosomal protein bS20 family.

The protein localises to the plastid. It is found in the cyanelle. Functionally, binds directly to 16S ribosomal RNA. The sequence is that of Small ribosomal subunit protein bS20c (rps20) from Cyanophora paradoxa.